The following is a 339-amino-acid chain: Cathepsin B (339 aa).

Residues 1-17 (MWQLWASLCCLLALADA) form the signal peptide. Residues 18–79 (RSRPSFHPLS…QRVMFTEDLK (62 aa)) constitute a propeptide, activation peptide. Cystine bridges form between Cys93/Cys122, Cys105/Cys150, Cys141/Cys207, Cys142/Cys146, Cys179/Cys211, and Cys187/Cys198. Residue Cys108 is part of the active site. The N-linked (GlcNAc...) asparagine glycan is linked to Asn192. An N6-acetyllysine modification is found at Lys220. Active-site residues include His278 and Asn298. Positions 334 to 339 (QYWEKI) are excised as a propeptide.

It belongs to the peptidase C1 family. In terms of assembly, dimer of a heavy chain and a light chain cross-linked by a disulfide bond. Interacts with SRPX2. Directly interacts with SHKBP1.

The protein localises to the lysosome. It is found in the melanosome. The protein resides in the secreted. Its subcellular location is the extracellular space. It localises to the apical cell membrane. The catalysed reaction is Hydrolysis of proteins with broad specificity for peptide bonds. Preferentially cleaves -Arg-Arg-|-Xaa bonds in small molecule substrates (thus differing from cathepsin L). In addition to being an endopeptidase, shows peptidyl-dipeptidase activity, liberating C-terminal dipeptides.. Functionally, thiol protease which is believed to participate in intracellular degradation and turnover of proteins. Cleaves matrix extracellular phosphoglycoprotein MEPE. Involved in the solubilization of cross-linked TG/thyroglobulin in the thyroid follicle lumen. Has also been implicated in tumor invasion and metastasis. The chain is Cathepsin B (CTSB) from Pongo abelii (Sumatran orangutan).